The sequence spans 150 residues: Helix-loop-helix protein hlh-12 (150 aa).

Residues 1–24 (MAKKPRVTKLNTDRRSRANERERQ) form a disordered region. A compositionally biased stretch (basic and acidic residues) spans 11 to 24 (NTDRRSRANERERQ). Positions 13–26 (DRRSRANERERQRV) are basic motif. Positions 13–65 (DRRSRANERERQRVSEMNGMFDVLLNLLPPSHFKTRLSRVQILREATSYIIRL) constitute a bHLH domain. The tract at residues 27–65 (SEMNGMFDVLLNLLPPSHFKTRLSRVQILREATSYIIRL) is helix-loop-helix motif.

Forms a heterodimer with helix-loop-helix protein hlh-2.

It is found in the nucleus. In terms of biological role, transcription factor which binds the E box motif 5'-GCAGGTG-3'. Involved in migration of the gonadal leader cells; distal tip cells (DTCs) in hermaphrodites, and linker cells in males. Positively regulates expression of alpha integrin ina-1 and ADAMTS protease gon-1. This chain is Helix-loop-helix protein hlh-12, found in Caenorhabditis elegans.